A 154-amino-acid chain; its full sequence is Endoribonuclease YbeY (154 aa).

Zn(2+) contacts are provided by histidine 113, histidine 117, and histidine 123.

This sequence belongs to the endoribonuclease YbeY family. Zn(2+) is required as a cofactor.

Its subcellular location is the cytoplasm. Single strand-specific metallo-endoribonuclease involved in late-stage 70S ribosome quality control and in maturation of the 3' terminus of the 16S rRNA. The chain is Endoribonuclease YbeY from Verminephrobacter eiseniae (strain EF01-2).